The chain runs to 209 residues: MTDSVELEPAAAAQLFGDRLPIARTFTANLASQGEERGLIGPLELPRLWSRHILNSAIVAPLLRPGVVGDVGSGAGLPGLVLAIARPDVSFVLIEPMDRRVIWLNEQVAELGLLNVDIVRARAEDAKLAKPLDQVTARAVSAFRKLLPLTAPLLRDGGELVLMKGAAAQAEIDGAAKEISKFKVRGAEVIVLGEGVLDEVTRVIRATVR.

Residues glycine 72, leucine 77, alanine 123–glutamate 124, and arginine 138 contribute to the S-adenosyl-L-methionine site.

It belongs to the methyltransferase superfamily. RNA methyltransferase RsmG family.

The protein resides in the cytoplasm. In terms of biological role, specifically methylates the N7 position of guanine in position 518 of 16S rRNA. This is Ribosomal RNA small subunit methyltransferase G from Leifsonia xyli subsp. xyli (strain CTCB07).